An 89-amino-acid chain; its full sequence is UPF0367 protein MAE_19160 (89 aa).

It belongs to the UPF0367 family.

The protein is UPF0367 protein MAE_19160 of Microcystis aeruginosa (strain NIES-843 / IAM M-2473).